The following is a 402-amino-acid chain: Tyrosine--tRNA ligase (402 aa).

Residues 47-56 (PTAPDLHLGH) carry the 'HIGH' region motif. A 'KMSKS' region motif is present at residues 232 to 236 (KMSKS). Lys235 is a binding site for ATP. Positions 341 to 401 (VGILDVLKQI…GKKRFMKLNI (61 aa)) constitute an S4 RNA-binding domain.

This sequence belongs to the class-I aminoacyl-tRNA synthetase family. TyrS type 2 subfamily. In terms of assembly, homodimer.

It is found in the cytoplasm. It carries out the reaction tRNA(Tyr) + L-tyrosine + ATP = L-tyrosyl-tRNA(Tyr) + AMP + diphosphate + H(+). Its function is as follows. Catalyzes the attachment of tyrosine to tRNA(Tyr) in a two-step reaction: tyrosine is first activated by ATP to form Tyr-AMP and then transferred to the acceptor end of tRNA(Tyr). This Helicobacter pylori (strain ATCC 700392 / 26695) (Campylobacter pylori) protein is Tyrosine--tRNA ligase.